The sequence spans 264 residues: Cyclin-P1-1 (264 aa).

Residues 1–25 (MDAAAAAGGEMSRQKATASAPPPPE) are disordered.

This sequence belongs to the cyclin family. Cyclin U/P subfamily.

This chain is Cyclin-P1-1 (CYCP1-1), found in Oryza sativa subsp. japonica (Rice).